We begin with the raw amino-acid sequence, 616 residues long: Dihydroxy-acid dehydratase (616 aa).

Aspartate 81 is a Mg(2+) binding site. Cysteine 122 lines the [2Fe-2S] cluster pocket. Positions 123 and 124 each coordinate Mg(2+). Lysine 124 is modified (N6-carboxylysine). Cysteine 195 contributes to the [2Fe-2S] cluster binding site. Glutamate 491 serves as a coordination point for Mg(2+). Serine 517 (proton acceptor) is an active-site residue.

This sequence belongs to the IlvD/Edd family. Homodimer. [2Fe-2S] cluster serves as cofactor. Mg(2+) is required as a cofactor.

The enzyme catalyses (2R)-2,3-dihydroxy-3-methylbutanoate = 3-methyl-2-oxobutanoate + H2O. It carries out the reaction (2R,3R)-2,3-dihydroxy-3-methylpentanoate = (S)-3-methyl-2-oxopentanoate + H2O. It participates in amino-acid biosynthesis; L-isoleucine biosynthesis; L-isoleucine from 2-oxobutanoate: step 3/4. Its pathway is amino-acid biosynthesis; L-valine biosynthesis; L-valine from pyruvate: step 3/4. In terms of biological role, functions in the biosynthesis of branched-chain amino acids. Catalyzes the dehydration of (2R,3R)-2,3-dihydroxy-3-methylpentanoate (2,3-dihydroxy-3-methylvalerate) into 2-oxo-3-methylpentanoate (2-oxo-3-methylvalerate) and of (2R)-2,3-dihydroxy-3-methylbutanoate (2,3-dihydroxyisovalerate) into 2-oxo-3-methylbutanoate (2-oxoisovalerate), the penultimate precursor to L-isoleucine and L-valine, respectively. This chain is Dihydroxy-acid dehydratase, found in Escherichia coli O81 (strain ED1a).